The sequence spans 810 residues: MQFPESWLRTFVDPQLTTDELSHALTMAGLEVESLRPAAPPTEKIVVGRVLEVVKHPDADKLNVCQVDAGTGATLQIVCGAPNVAPGIKVPVALVGAKLPPAEEGGAPFAIKLSKLRGVESQGMLCSARELKLSEDHSGLMILPEGTPVGQDIREALNLDDTVFEIKLTPNKADCLSVFGIARETAAITGAPLAAPDIRPVLAELTETLPVKISAPDLCGRFSGRVIRGVNARAKTPHWMVERLERAGQRSVSALVDISNYVMFELGRPSHVFDLDKIHGGIDVRWGKRGESLKLLNGNTIELDETVGVISDGAQVESLAGIMGGDSTAVTLDTTNIYLEAAFWWPDSIRGRARKYNFSTDAAHRFERGVDYSTTVEHVERITQLILDICGGQAGPVDDQIVNLPQRAPVSMRASRANRIIGVEIGEDEIAQIFTRLGLAFERDGDVFRVTPPPHRFDIEIEEDLIEEVARIYGFEKIPARPPVAKSEMRATDETRRSVHAIRHALAARDYAETVNFSFVDAEWERDFAGNDNPVRLLNPIASQLSVMRTTLFGSLVGVLRHNLNRRAERVRVFEAGRVFVADPSVKAGELAVEGYAQPKRIGALAYGPVVEEQWGTATRQVDYFDVKGDLEALLAPVPARFVKAEHPALHPGRSARIEVDGHAVGWIGELHPRLMQKYELPHAPVMFEIDTDALVARALPAPSEVSKFPPVRRDIAVVVDQKVEVQALFDEMKKALADDACKFVQRVALFDEFRAKSNTSGGLSAHEKSLAFRVTLQDAAGTLQDETVDQAIQTLVDRMARVYGARLRG.

The tRNA-binding domain maps to 39 to 154; that stretch reads APPTEKIVVG…EGTPVGQDIR (116 aa). A B5 domain is found at 405–480; that stretch reads PQRAPVSMRA…RIYGFEKIPA (76 aa). Positions 458, 464, 467, and 468 each coordinate Mg(2+). One can recognise an FDX-ACB domain in the interval 707–809; that stretch reads SKFPPVRRDI…MARVYGARLR (103 aa).

It belongs to the phenylalanyl-tRNA synthetase beta subunit family. Type 1 subfamily. Tetramer of two alpha and two beta subunits. Requires Mg(2+) as cofactor.

Its subcellular location is the cytoplasm. It catalyses the reaction tRNA(Phe) + L-phenylalanine + ATP = L-phenylalanyl-tRNA(Phe) + AMP + diphosphate + H(+). In Burkholderia pseudomallei (strain 1710b), this protein is Phenylalanine--tRNA ligase beta subunit.